A 243-amino-acid polypeptide reads, in one-letter code: DUF724 domain-containing protein 5 (243 aa).

Over residues 1–24 the composition is skewed to basic and acidic residues; the sequence is MREKHYSEDNSRKRKRGELEHNSD. The interval 1-51 is disordered; sequence MREKHYSEDNSRKRKRGELEHNSDLNETVLPSDWTPDPVKNFAADDDDEET. The DUF724 domain maps to 59–243; sequence VLPFVKKSPV…DLGVELEDVE (185 aa). The stretch at 174 to 223 forms a coiled coil; sequence KEMKDESSKKHKAEQEFGEMERKILEVKNKVLELQKQEAALEKQKDATYE.

Homodimer. Expressed in leaves, flowers and siliques.

It localises to the nucleus. May be involved in the polar growth of plant cells via transportation of RNAs. In Arabidopsis thaliana (Mouse-ear cress), this protein is DUF724 domain-containing protein 5.